A 32-amino-acid chain; its full sequence is Delta-actitoxin-Eqd1a (32 aa).

Belongs to the sea anemone short toxin (type III) family. Post-translationally, contains 4 disulfide bonds.

It localises to the secreted. It is found in the nematocyst. Binds specifically to sodium channels (Nav) of the axonal membrane of crayfish and prolongs the falling phase of the action potential. It also increases the maximum rates of rise of both action potential and resting potential. Is only active on crustaceans. This chain is Delta-actitoxin-Eqd1a, found in Entacmaea quadricolor (Bubble-tip anemone).